A 257-amino-acid chain; its full sequence is Snake venom serine protease KN11 (257 aa).

An N-terminal signal peptide occupies residues 1-18; the sequence is MVLIRVLANLLILQLSYA. A propeptide spanning residues 19–24 is cleaved from the precursor; sequence QKSSEL. The Peptidase S1 domain maps to 25 to 248; sequence VTGGHPCNIN…HLDWIKSIIA (224 aa). 6 disulfide bridges follow: cysteine 31-cysteine 162, cysteine 49-cysteine 65, cysteine 97-cysteine 255, cysteine 141-cysteine 209, cysteine 173-cysteine 188, and cysteine 199-cysteine 224. Active-site charge relay system residues include histidine 64 and aspartate 109. 2 N-linked (GlcNAc...) asparagine glycosylation sites follow: asparagine 120 and asparagine 121. Residue serine 203 is the Charge relay system of the active site.

It belongs to the peptidase S1 family. Snake venom subfamily. In terms of assembly, monomer. In terms of tissue distribution, expressed by the venom gland.

Its subcellular location is the secreted. Its function is as follows. Snake venom serine protease that may act in the hemostasis system of the prey. The sequence is that of Snake venom serine protease KN11 from Trimeresurus stejnegeri (Chinese green tree viper).